Consider the following 305-residue polypeptide: Ribosomal RNA small subunit methyltransferase H (305 aa).

Residues 47–49 (GGH), D66, F93, D108, and Q115 each bind S-adenosyl-L-methionine. Residues 279-305 (ADSNEKLNNPRSRSAKLRLAKKRNPNE) are disordered. Residues 291–305 (RSAKLRLAKKRNPNE) are compositionally biased toward basic residues.

This sequence belongs to the methyltransferase superfamily. RsmH family.

It localises to the cytoplasm. It catalyses the reaction cytidine(1402) in 16S rRNA + S-adenosyl-L-methionine = N(4)-methylcytidine(1402) in 16S rRNA + S-adenosyl-L-homocysteine + H(+). In terms of biological role, specifically methylates the N4 position of cytidine in position 1402 (C1402) of 16S rRNA. This chain is Ribosomal RNA small subunit methyltransferase H, found in Prochlorococcus marinus (strain SARG / CCMP1375 / SS120).